The sequence spans 174 residues: Large ribosomal subunit protein uL10 (174 aa).

It belongs to the universal ribosomal protein uL10 family. In terms of assembly, part of the ribosomal stalk of the 50S ribosomal subunit. The N-terminus interacts with L11 and the large rRNA to form the base of the stalk. The C-terminus forms an elongated spine to which L12 dimers bind in a sequential fashion forming a multimeric L10(L12)X complex.

In terms of biological role, forms part of the ribosomal stalk, playing a central role in the interaction of the ribosome with GTP-bound translation factors. In Anaeromyxobacter dehalogenans (strain 2CP-C), this protein is Large ribosomal subunit protein uL10.